The primary structure comprises 322 residues: Cytochrome f (322 aa).

The first 35 residues, 1–35 (MQTRNTFSWTWIREEITRSISVSLMIYIITWSSIS), serve as a signal peptide directing secretion. Heme-binding residues include Tyr-38, Cys-58, Cys-61, and His-62. The chain crosses the membrane as a helical span at residues 288 to 308 (VQGLLFFLGSVVLAQIFLVLK).

Belongs to the cytochrome f family. The 4 large subunits of the cytochrome b6-f complex are cytochrome b6, subunit IV (17 kDa polypeptide, petD), cytochrome f and the Rieske protein, while the 4 small subunits are PetG, PetL, PetM and PetN. The complex functions as a dimer. The cofactor is heme.

Its subcellular location is the plastid. The protein localises to the chloroplast thylakoid membrane. Component of the cytochrome b6-f complex, which mediates electron transfer between photosystem II (PSII) and photosystem I (PSI), cyclic electron flow around PSI, and state transitions. The protein is Cytochrome f of Aethionema grandiflorum (Persian stone-cress).